A 306-amino-acid polypeptide reads, in one-letter code: Protoheme IX farnesyltransferase (306 aa).

The next 8 helical transmembrane spans lie at 31 to 50, 55 to 77, 104 to 124, 125 to 145, 168 to 188, 218 to 235, 238 to 258, and 286 to 306; these read VIEL…QGGW, LILG…NCYI, LVFA…ISNW, LAAA…TLWL, WAAV…IVFL, GRAA…ATLA, LLLI…LAGG, and ASIS…LLPF.

Belongs to the UbiA prenyltransferase family. Protoheme IX farnesyltransferase subfamily.

Its subcellular location is the cell membrane. The catalysed reaction is heme b + (2E,6E)-farnesyl diphosphate + H2O = Fe(II)-heme o + diphosphate. Its pathway is porphyrin-containing compound metabolism; heme O biosynthesis; heme O from protoheme: step 1/1. In terms of biological role, converts heme B (protoheme IX) to heme O by substitution of the vinyl group on carbon 2 of heme B porphyrin ring with a hydroxyethyl farnesyl side group. The polypeptide is Protoheme IX farnesyltransferase (Clavibacter michiganensis subsp. michiganensis (strain NCPPB 382)).